Consider the following 98-residue polypeptide: Acylphosphatase (98 aa).

The region spanning 12–98 (TYYVRVRGVV…DKRFERFQQH (87 aa)) is the Acylphosphatase-like domain. Residues R27 and N45 contribute to the active site.

It belongs to the acylphosphatase family.

The catalysed reaction is an acyl phosphate + H2O = a carboxylate + phosphate + H(+). In Burkholderia mallei (strain NCTC 10247), this protein is Acylphosphatase (acyP).